Reading from the N-terminus, the 100-residue chain is Urease subunit gamma (100 aa).

Belongs to the urease gamma subunit family. In terms of assembly, heterotrimer of UreA (gamma), UreB (beta) and UreC (alpha) subunits. Three heterotrimers associate to form the active enzyme.

The protein localises to the cytoplasm. It catalyses the reaction urea + 2 H2O + H(+) = hydrogencarbonate + 2 NH4(+). The protein operates within nitrogen metabolism; urea degradation; CO(2) and NH(3) from urea (urease route): step 1/1. The protein is Urease subunit gamma of Saccharopolyspora erythraea (strain ATCC 11635 / DSM 40517 / JCM 4748 / NBRC 13426 / NCIMB 8594 / NRRL 2338).